The sequence spans 658 residues: Threonine--tRNA ligase (658 aa).

The region spanning 1-61 (MIELVFPDGS…EKGGAFKILT (61 aa)) is the TGS domain. Residues 243–535 (DHRKLGRQMD…LIENYAGAFP (293 aa)) form a catalytic region. Zn(2+) is bound by residues Cys-335, His-386, and His-512.

The protein belongs to the class-II aminoacyl-tRNA synthetase family. Homodimer. Requires Zn(2+) as cofactor.

Its subcellular location is the cytoplasm. The enzyme catalyses tRNA(Thr) + L-threonine + ATP = L-threonyl-tRNA(Thr) + AMP + diphosphate + H(+). Functionally, catalyzes the attachment of threonine to tRNA(Thr) in a two-step reaction: L-threonine is first activated by ATP to form Thr-AMP and then transferred to the acceptor end of tRNA(Thr). Also edits incorrectly charged L-seryl-tRNA(Thr). The sequence is that of Threonine--tRNA ligase from Phenylobacterium zucineum (strain HLK1).